A 326-amino-acid chain; its full sequence is Putative HTH-type transcriptional regulator y4qH (326 aa).

Residues 257 to 322 (AVQKIPALSL…VAAIKAISLG (66 aa)) enclose the HTH luxR-type domain. A DNA-binding region (H-T-H motif) is located at residues 281–300 (SWDIGVIMRISENTVNFHIK).

Belongs to the autoinducer-regulated transcriptional regulatory protein family.

The chain is Putative HTH-type transcriptional regulator y4qH from Sinorhizobium fredii (strain NBRC 101917 / NGR234).